The following is a 406-amino-acid chain: Argininosuccinate synthase (406 aa).

Residues 10 to 18 and Ala-37 each bind ATP; that span reads AYSGGLDTS. L-citrulline is bound by residues Tyr-88 and Ser-93. Gly-118 lines the ATP pocket. 3 residues coordinate L-aspartate: Thr-120, Asn-124, and Asp-125. An L-citrulline-binding site is contributed by Asn-124. L-citrulline-binding residues include Arg-128, Ser-179, Ser-188, Glu-264, and Tyr-276.

The protein belongs to the argininosuccinate synthase family. Type 1 subfamily. As to quaternary structure, homotetramer.

It localises to the cytoplasm. The enzyme catalyses L-citrulline + L-aspartate + ATP = 2-(N(omega)-L-arginino)succinate + AMP + diphosphate + H(+). It functions in the pathway amino-acid biosynthesis; L-arginine biosynthesis; L-arginine from L-ornithine and carbamoyl phosphate: step 2/3. This is Argininosuccinate synthase from Roseobacter denitrificans (strain ATCC 33942 / OCh 114) (Erythrobacter sp. (strain OCh 114)).